A 321-amino-acid polypeptide reads, in one-letter code: CRISPR system ring nuclease SSO1393 (321 aa).

This sequence belongs to the cOA ring nuclease family. In terms of assembly, homodimer. Does not require a metal cofactor. serves as cofactor.

It localises to the cytoplasm. It catalyses the reaction cyclic tetraadenylate = 2 5'-hydroxy-diadenylate 2',3'-cylic phosphate. Functionally, CRISPR (clustered regularly interspaced short palindromic repeat) is an adaptive immune system that provides protection against mobile genetic elements (viruses, transposable elements and conjugative plasmids). CRISPR clusters contain spacers, sequences complementary to antecedent mobile elements, and target invading nucleic acids. CRISPR clusters are transcribed and processed into CRISPR RNA (crRNA). A nuclease that degrades cyclic oligoadenylates (cOA), second messengers that induce an antiviral state important for defense against invading nucleic acids. Destruction of cOA deactivates the Csx1 ribonuclease, preventing uncontrolled degradation of cellular RNA. Slowly degrades cA4 (a tetraadenylate ring) into first a linear tetraadenylate product and secondly into a linear diadenylate product with 5'-OH and 2',3'-cyclic phosphate termini. Is 10-fold less active than SSO2081, suggesting it plays a minor role in cA4 degradation. There may be 2 active sites per homodimer. The protein is CRISPR system ring nuclease SSO1393 of Saccharolobus solfataricus (strain ATCC 35092 / DSM 1617 / JCM 11322 / P2) (Sulfolobus solfataricus).